We begin with the raw amino-acid sequence, 373 residues long: Anhydro-N-acetylmuramic acid kinase (373 aa).

13–20 (GTSMDGID) serves as a coordination point for ATP.

Belongs to the anhydro-N-acetylmuramic acid kinase family.

The catalysed reaction is 1,6-anhydro-N-acetyl-beta-muramate + ATP + H2O = N-acetyl-D-muramate 6-phosphate + ADP + H(+). It functions in the pathway amino-sugar metabolism; 1,6-anhydro-N-acetylmuramate degradation. The protein operates within cell wall biogenesis; peptidoglycan recycling. In terms of biological role, catalyzes the specific phosphorylation of 1,6-anhydro-N-acetylmuramic acid (anhMurNAc) with the simultaneous cleavage of the 1,6-anhydro ring, generating MurNAc-6-P. Is required for the utilization of anhMurNAc either imported from the medium or derived from its own cell wall murein, and thus plays a role in cell wall recycling. In Brucella suis (strain ATCC 23445 / NCTC 10510), this protein is Anhydro-N-acetylmuramic acid kinase.